The chain runs to 112 residues: Type III inner-rod protein PscI (112 aa).

This sequence belongs to the YscI/HrpB family. In terms of assembly, homomultimer (through its C-terminal region).

Functionally, component of the type III secretion (T3S) injectisome that translocates effector toxins into host cells, facilitating the establishment and dissemination of infection. Polymerizes into flexible and regularly twisted fibrils and plays an essential role in needle assembly. This Pseudomonas aeruginosa (strain ATCC 15692 / DSM 22644 / CIP 104116 / JCM 14847 / LMG 12228 / 1C / PRS 101 / PAO1) protein is Type III inner-rod protein PscI (pscI).